The following is an 827-amino-acid chain: Lon protease 2 (827 aa).

Residues 1–22 (MSDEKKKGSAASAMPTAMAPPG) form a disordered region. The segment covering 9-21 (SAASAMPTAMAPP) has biased composition (low complexity). A Lon N-terminal domain is found at 33 to 227 (LPILPLRNSV…LVLELLNRKR (195 aa)). Residue 379–386 (GPPGVGKT) coordinates ATP. Residues 615–796 (TEVPGVATGL…DDVLKAALET (182 aa)) enclose the Lon proteolytic domain. Residues serine 702 and lysine 745 contribute to the active site. The tract at residues 799 to 827 (VGVAGTPGGEPGKEAPLPKPAESAPEVRA) is disordered.

Belongs to the peptidase S16 family. As to quaternary structure, homohexamer. Organized in a ring with a central cavity.

The protein resides in the cytoplasm. The catalysed reaction is Hydrolysis of proteins in presence of ATP.. Functionally, ATP-dependent serine protease that mediates the selective degradation of mutant and abnormal proteins as well as certain short-lived regulatory proteins. Required for cellular homeostasis and for survival from DNA damage and developmental changes induced by stress. Degrades polypeptides processively to yield small peptide fragments that are 5 to 10 amino acids long. Binds to DNA in a double-stranded, site-specific manner. This Myxococcus xanthus protein is Lon protease 2.